The following is a 235-amino-acid chain: Purine nucleoside phosphorylase DeoD-type (235 aa).

His-4 contributes to the a purine D-ribonucleoside binding site. Residues Gly-20, Arg-24, Arg-43, and 87–90 (RVGT) each bind phosphate. Residues 178–180 (EME) and 202–203 (SD) contribute to the a purine D-ribonucleoside site. Asp-203 acts as the Proton donor in catalysis.

It belongs to the PNP/UDP phosphorylase family. As to quaternary structure, homohexamer; trimer of homodimers.

The catalysed reaction is a purine D-ribonucleoside + phosphate = a purine nucleobase + alpha-D-ribose 1-phosphate. It carries out the reaction a purine 2'-deoxy-D-ribonucleoside + phosphate = a purine nucleobase + 2-deoxy-alpha-D-ribose 1-phosphate. Functionally, catalyzes the reversible phosphorolytic breakdown of the N-glycosidic bond in the beta-(deoxy)ribonucleoside molecules, with the formation of the corresponding free purine bases and pentose-1-phosphate. In Geobacillus sp. (strain WCH70), this protein is Purine nucleoside phosphorylase DeoD-type.